We begin with the raw amino-acid sequence, 126 residues long: Holo-[acyl-carrier-protein] synthase (126 aa).

Positions 9 and 58 each coordinate Mg(2+).

This sequence belongs to the P-Pant transferase superfamily. AcpS family. The cofactor is Mg(2+).

It is found in the cytoplasm. The catalysed reaction is apo-[ACP] + CoA = holo-[ACP] + adenosine 3',5'-bisphosphate + H(+). Functionally, transfers the 4'-phosphopantetheine moiety from coenzyme A to a Ser of acyl-carrier-protein. This is Holo-[acyl-carrier-protein] synthase from Escherichia coli O139:H28 (strain E24377A / ETEC).